The sequence spans 431 residues: UDP-N-acetylmuramate--L-alanine ligase (431 aa).

108 to 114 provides a ligand contact to ATP; the sequence is GAHGKST.

Belongs to the MurCDEF family.

It localises to the cytoplasm. It catalyses the reaction UDP-N-acetyl-alpha-D-muramate + L-alanine + ATP = UDP-N-acetyl-alpha-D-muramoyl-L-alanine + ADP + phosphate + H(+). It participates in cell wall biogenesis; peptidoglycan biosynthesis. Functionally, cell wall formation. This is UDP-N-acetylmuramate--L-alanine ligase from Campylobacter jejuni subsp. jejuni serotype O:23/36 (strain 81-176).